The sequence spans 462 residues: UDP-N-acetylmuramoylalanine--D-glutamate ligase (462 aa).

Residue Gly-120 to Thr-126 participates in ATP binding.

The protein belongs to the MurCDEF family.

The protein localises to the cytoplasm. The catalysed reaction is UDP-N-acetyl-alpha-D-muramoyl-L-alanine + D-glutamate + ATP = UDP-N-acetyl-alpha-D-muramoyl-L-alanyl-D-glutamate + ADP + phosphate + H(+). The protein operates within cell wall biogenesis; peptidoglycan biosynthesis. Functionally, cell wall formation. Catalyzes the addition of glutamate to the nucleotide precursor UDP-N-acetylmuramoyl-L-alanine (UMA). The sequence is that of UDP-N-acetylmuramoylalanine--D-glutamate ligase from Bdellovibrio bacteriovorus (strain ATCC 15356 / DSM 50701 / NCIMB 9529 / HD100).